We begin with the raw amino-acid sequence, 84 residues long: Elongation factor 1-beta (84 aa).

This sequence belongs to the EF-1-beta/EF-1-delta family.

Promotes the exchange of GDP for GTP in EF-1-alpha/GDP, thus allowing the regeneration of EF-1-alpha/GTP that could then be used to form the ternary complex EF-1-alpha/GTP/AAtRNA. In Methanoculleus marisnigri (strain ATCC 35101 / DSM 1498 / JR1), this protein is Elongation factor 1-beta.